The chain runs to 3707 residues: CUB and sushi domain-containing protein 3 (3707 aa).

Positions 1 to 21 (MKGSRKGESRAKESKPREPGT) are enriched in basic and acidic residues. The segment at 1 to 22 (MKGSRKGESRAKESKPREPGTR) is disordered. The Cytoplasmic segment spans residues 1 to 42 (MKGSRKGESRAKESKPREPGTRRCAKCGRLDFILKKKMGIKS). A helical membrane pass occupies residues 43–63 (GFTFWNLVFLLTLSCVKGFIY). Residues 64-3630 (TCGGTLKGLN…NQPHGTNSSS (3567 aa)) lie on the Extracellular side of the membrane. 4 disulfide bridges follow: C65/C91, C178/C218, C204/C235, and C241/C267. A CUB 1 domain is found at 65-173 (CGGTLKGLNG…HGFKVYYEEL (109 aa)). N73 and N90 each carry an N-linked (GlcNAc...) asparagine glycan. The 62-residue stretch at 176 to 237 (SSCGNPGVPP…WDFPVPICRA (62 aa)) folds into the Sushi 1 domain. The 105-residue stretch at 241–345 (CGGTMRGSSG…RGFSAPYQGS (105 aa)) folds into the CUB 2 domain. Positions 388–437 (HRLSEEQRVQVRSLSDSGLDPNTPEDQLSPHQADTQSTSRRPRNAEQIER) are disordered. Positions 411-426 (PEDQLSPHQADTQSTS) are enriched in polar residues. Positions 484–545 (NLCPDPGEPE…WSDHRPVCKV (62 aa)) constitute a Sushi 2 domain. 6 disulfide bridges follow: C486–C526, C512–C543, C548–C574, C664–C704, C690–C717, and C721–C747. One can recognise a CUB 3 domain in the interval 548–659 (CGSNLQGPSG…VGFKVNYKEI (112 aa)). Residues 662 to 719 (ESCGDPGTPLYGIREGDGFSNRDVLRFECQFGFELIGEKSIVCQENNQWSANIPICIF) form the Sushi 3 domain. Residues 721–829 (CLSNFTAPMG…RGFNITYNTF (109 aa)) enclose the CUB 4 domain. 2 N-linked (GlcNAc...) asparagine glycosylation sites follow: N724 and N823. The region spanning 832–893 (NECPDPGIPI…WSGPIPRCGA (62 aa)) is the Sushi 4 domain. 3 cysteine pairs are disulfide-bonded: C834/C875, C860/C891, and C895/C921. In terms of domain architecture, CUB 5 spans 895–1003 (CGGHFSAPSG…NGFKIHYESV (109 aa)). N966 carries an N-linked (GlcNAc...) asparagine glycan. The Sushi 5 domain occupies 1008–1065 (YSCLDPGIPVHGRRYGHDFSIGSTVSFSCDPGYRLSHEEPLLCEKNHWWSHPLPTCDA). Intrachain disulfides connect C1010–C1050, C1036–C1063, and C1067–C1093. One can recognise a CUB 6 domain in the interval 1067–1177 (CGGDVRGPSG…EGFNITFSEY (111 aa)). N1092, N1126, and N1171 each carry an N-linked (GlcNAc...) asparagine glycan. Residues 1180 to 1239 (EPCEDPGIPQYGSRVGFSFGVGDTLTFSCSLGYRLEGSSEIICLGGGRRVWSAPLPRCVA) form the Sushi 6 domain. Cystine bridges form between C1182-C1222, C1208-C1237, and C1241-C1267. The CUB 7 domain maps to 1241-1349 (CGASATNNEG…EGFQLVYTSF (109 aa)). N-linked (GlcNAc...) asparagine glycosylation occurs at N1280. Residues 1352–1412 (SHCEDPGIPQ…WDYPLPSCIA (61 aa)) form the Sushi 7 domain. Disulfide bonds link C1354/C1395, C1381/C1410, C1414/C1441, C1528/C1568, C1554/C1584, C1588/C1614, C1701/C1741, C1727/C1758, C1762/C1788, C1878/C1918, C1904/C1935, and C1939/C1965. One can recognise a CUB 8 domain in the interval 1414-1523 (CGGRFKGESS…SGFAIQFSSS (110 aa)). One can recognise a Sushi 8 domain in the interval 1526-1586 (TACRDPGVPM…WQPSPPVCIA (61 aa)). A glycan (N-linked (GlcNAc...) asparagine) is linked at N1536. The 109-residue stretch at 1588-1696 (CGGNLTGSSG…TGFHLEYKAK (109 aa)) folds into the CUB 9 domain. N1591 and N1709 each carry an N-linked (GlcNAc...) asparagine glycan. Residues 1699-1760 (ESCFDPGNIM…WNRVLPSCHA (62 aa)) form the Sushi 9 domain. The CUB 10 domain maps to 1762 to 1870 (CGSRSTGSEG…KGFHFVYQAV (109 aa)). Residue N1781 is glycosylated (N-linked (GlcNAc...) asparagine). The Sushi 10 domain occupies 1876–1937 (TQCSSVPEPR…WNDSLPTCIV (62 aa)). A glycan (N-linked (GlcNAc...) asparagine) is linked at N1929. Residues 1939–2047 (CGGILTKRKG…AGFHLEYTAI (109 aa)) form the CUB 11 domain. A glycan (N-linked (GlcNAc...) asparagine) is linked at N2019. The region spanning 2050-2109 (DSCPEPQTPSSGIKVGDRYMVGDVVSFQCDQGYSLQGHSHITCMPGPVRRWNYPIPICLA) is the Sushi 11 domain. 3 disulfides stabilise this stretch: C2052–C2092, C2078–C2107, and C2111–C2137. In terms of domain architecture, CUB 12 spans 2111 to 2219 (CGGAMSDFSG…QGFHIVYQAY (109 aa)). Residue N2155 is glycosylated (N-linked (GlcNAc...) asparagine). The Sushi 12 domain maps to 2222 to 2281 (QSCPDPRPFRNGFVIGNDFTVGQTISFECFPGYTLIGNSALTCLHGVSRNWNHPLPRCEA). Disulfide bonds link C2224/C2264, C2250/C2279, C2283/C2309, C2395/C2437, C2423/C2452, C2456/C2484, C2569/C2610, C2596/C2627, C2632/C2674, C2658/C2689, C2694/C2739, C2725/C2754, C2759/C2799, C2785/C2812, C2817/C2857, C2843/C2870, C2875/C2915, C2901/C2928, C2933/C2977, C2963/C2990, C2995/C3035, C3021/C3048, C3056/C3096, C3082/C3109, C3114/C3155, C3141/C3168, C3173/C3215, C3199/C3228, C3233/C3273, C3259/C3286, C3291/C3331, C3317/C3344, C3352/C3393, C3379/C3406, C3411/C3453, and C3438/C3466. The 112-residue stretch at 2283 to 2394 (CGGNITAMNG…LSYHAYQLRV (112 aa)) folds into the CUB 13 domain. N2286 and N2291 each carry an N-linked (GlcNAc...) asparagine glycan. The 62-residue stretch at 2393–2454 (RVCQPPPPVP…MDGAPPVCQV (62 aa)) folds into the Sushi 13 domain. A CUB 14 domain is found at 2456-2567 (CPANELRLDS…KGFRIRYIAF (112 aa)). Sushi domains follow at residues 2567-2629 (FYCS…ACQA), 2630-2691 (ISCG…RCVV), 2692-2756 (VTCP…YCQI), 2757-2814 (ISCG…RCLA), 2815-2872 (GHCG…SCVP), 2873-2930 (VSCG…VCKV), 2931-2992 (VNCS…ECIM), 2993-3050 (IDCG…HCSG), 3054-3111 (GTCG…ECKA), 3112-3170 (VQCG…NCTI), 3171-3230 (ISCG…TCRA), 3231-3288 (VTCS…QCLP), 3289-3346 (KFCG…HCIE), 3350-3408 (TSCE…ECIP), and 3409-3468 (HSCK…VCEA). Positions 3052 to 3065 (TTGTCGDPGTPGHG) are enriched in low complexity. The tract at residues 3052 to 3071 (TTGTCGDPGTPGHGSRQESD) is disordered. A helical membrane pass occupies residues 3631–3651 (VAIAILVPFFALIFAGFGFYL). Over 3652–3707 (YKQRTAPKTQYTGCSVHENNNGQAAFENPMYDTNAKSVEGKAVRFDPNLNTVCTMV) the chain is Cytoplasmic.

This sequence belongs to the CSMD family. Expressed in the apical dendrites of postnatal hippocampal neurons (at protein level).

The protein localises to the cell membrane. Its function is as follows. Involved in dendrite development. In Mus musculus (Mouse), this protein is CUB and sushi domain-containing protein 3 (Csmd3).